A 403-amino-acid chain; its full sequence is Tyrosine--tRNA ligase (403 aa).

A 'HIGH' region motif is present at residues 42–51; the sequence is PTAPDLHLGH. A 'KMSKS' region motif is present at residues 226–230; that stretch reads KMSKS. Residue Lys-229 coordinates ATP. One can recognise an S4 RNA-binding domain in the interval 339–400; sequence LRIASLLTAA…GKRNFARVSL (62 aa).

Belongs to the class-I aminoacyl-tRNA synthetase family. TyrS type 2 subfamily. Homodimer.

The protein resides in the cytoplasm. The enzyme catalyses tRNA(Tyr) + L-tyrosine + ATP = L-tyrosyl-tRNA(Tyr) + AMP + diphosphate + H(+). Catalyzes the attachment of tyrosine to tRNA(Tyr) in a two-step reaction: tyrosine is first activated by ATP to form Tyr-AMP and then transferred to the acceptor end of tRNA(Tyr). The chain is Tyrosine--tRNA ligase from Xanthomonas oryzae pv. oryzae (strain MAFF 311018).